The sequence spans 622 residues: Palmitoyl-protein thioesterase-dolichyl pyrophosphate phosphatase fusion 1 (622 aa).

An N-terminal signal peptide occupies residues 1–24; sequence MLSCSSFLIFFLFSWVLLPMKSFA. At 25–405 the chain is on the lumenal side; the sequence is IPIISLDKVR…NVSEEKGPKS (381 aa). A disulfide bond links C106 and C138. S125 is a catalytic residue. N-linked (GlcNAc...) asparagine glycosylation is present at N223. The active site involves D245. N-linked (GlcNAc...) asparagine glycosylation is present at N260. H298 is a catalytic residue. A glycan (N-linked (GlcNAc...) asparagine) is linked at N396. Residues 406 to 426 traverse the membrane as a helical segment; it reads FANLAFITIFSHFFYHIDDMW. Over 427 to 428 the chain is Cytoplasmic; it reads RS. A helical membrane pass occupies residues 429–449; sequence TLGLFSLIPQIIGIIYLTVMF. Topologically, residues 450 to 488 are lumenal; that stretch reads TGRELDTFMQFGGQVVNEFINYVVKVSLKYPRPADIEYG. Residues 489 to 511 form a helical membrane-spanning segment; that stretch reads VGYGMPSSHSQFMGFFSAYMIAW. Residues 512–519 lie on the Cytoplasmic side of the membrane; that stretch reads DYKYRRSQ. A helical membrane pass occupies residues 520–540; sequence CFSMLSFAKYAIYLTLSTFVC. The Lumenal portion of the chain corresponds to 541 to 552; it reads SSRYLLDFHYLT. The helical transmembrane segment at 553 to 573 threads the bilayer; it reads QVVYGYMIGFGVGLFWVYLVG. The Cytoplasmic segment spans residues 574 to 622; the sequence is KLRSLGVTKWLLSLPPLQFFYIKDTIPHSKDNHKRQWLESKQFKNQKSN.

This sequence in the N-terminal section; belongs to the palmitoyl-protein thioesterase family. The protein in the C-terminal section; belongs to the dolichyldiphosphatase family. Proteolytically cleaved, possibly by krp1.

It is found in the vacuole. It localises to the endoplasmic reticulum membrane. The enzyme catalyses S-hexadecanoyl-L-cysteinyl-[protein] + H2O = L-cysteinyl-[protein] + hexadecanoate + H(+). It carries out the reaction a di-trans,poly-cis-dolichyl diphosphate + H2O = a di-trans,poly-cis-dolichyl phosphate + phosphate + H(+). Its function is as follows. Essential protein. Removes thioester-linked fatty acyl groups such as palmitate from modified cysteine residues in proteins or peptides during vacuolar degradation. Required for efficient N-glycosylation. Necessary for maintaining optimal levels of dolichol-linked oligosaccharides. This Schizosaccharomyces pombe (strain 972 / ATCC 24843) (Fission yeast) protein is Palmitoyl-protein thioesterase-dolichyl pyrophosphate phosphatase fusion 1 (pdf1).